The sequence spans 104 residues: U20-lycotoxin-Ls1c (104 aa).

The signal sequence occupies residues 1–30 (MFSTSDQVSKMNSRILSALLILGIATCVIA). In terms of domain architecture, WAP spans 31 to 76 (GGFCPKSRHPQCDLSYKINDCCAQSDCRVGSVCCVEGCGNVCRAES). 5 cysteine pairs are disulfide-bonded: Cys-34–Cys-64, Cys-42–Cys-68, Cys-51–Cys-63, Cys-52–Cys-90, and Cys-57–Cys-72.

It belongs to the venom protein 11 family. 02 (wap-2) subfamily. In terms of processing, contains 5 disulfide bonds. As to expression, expressed by the venom gland.

The protein resides in the secreted. In terms of biological role, has antibacterial activity. In Lycosa singoriensis (Wolf spider), this protein is U20-lycotoxin-Ls1c.